The following is a 366-amino-acid chain: Galactoside alpha-(1,2)-fucosyltransferase 1 (366 aa).

The Cytoplasmic segment spans residues 1–8 (MWPLSHRH). A helical; Signal-anchor for type II membrane protein membrane pass occupies residues 9-25 (LCLAFLLVCVLSAISFF). The Lumenal portion of the chain corresponds to 26-366 (LHVHQDSFRH…LSPLWTLAEP (341 aa)). N-linked (GlcNAc...) asparagine glycosylation is found at Asn-66, Asn-302, and Asn-328.

Belongs to the glycosyltransferase 11 family.

The protein localises to the golgi apparatus. The protein resides in the golgi stack membrane. It catalyses the reaction a beta-D-galactosyl-(1-&gt;4)-N-acetyl-beta-D-glucosaminyl derivative + GDP-beta-L-fucose = an alpha-L-Fuc-(1-&gt;2)-beta-D-Gal-(1-&gt;4)-beta-D-GlcNAc derivative + GDP + H(+). The enzyme catalyses a ganglioside GA1 + GDP-beta-L-fucose = a ganglioside Fuc-GA1 + GDP + H(+). It carries out the reaction a beta-D-Gal-(1-&gt;3)-beta-D-GlcNAc-(1-&gt;3)-beta-D-Gal-(1-&gt;4)-beta-D-Glc-(1&lt;-&gt;1')-Cer(d18:1(4E)) + GDP-beta-L-fucose = alpha-L-fucosyl-(1-&gt;2)- beta-D-galactosyl-(1-&gt;3)-N-acetyl-beta-D-glucosaminyl-(1-&gt;3)-beta-D-galactosyl-(1-&gt;4)-beta-D-glucosyl-(1&lt;-&gt;1')-N-acylsphing-4-enine + GDP + H(+). The catalysed reaction is a neolactoside nLc4Cer(d18:1(4E)) + GDP-beta-L-fucose = a neolactoside IV(2)-alpha-Fuc-nLc4Cer(d18:1(4E)) + GDP + H(+). It catalyses the reaction a ganglioside GM1 + GDP-beta-L-fucose = a ganglioside Fuc-GM1 + GDP + H(+). The enzyme catalyses beta-D-galactosyl-(1-&gt;3)-N-acetyl-D-galactosamine + GDP-beta-L-fucose = alpha-L-fucosyl-(1-&gt;2)-beta-D-galactosyl-(1-&gt;3)-N-acetyl-D-galactosamine + GDP + H(+). It participates in protein modification; protein glycosylation. Catalyzes the transfer of L-fucose, from a guanosine diphosphate-beta-L-fucose, to the terminal galactose residue of glycoconjugates through an alpha(1,2) linkage leading to H antigen synthesis that is an intermediate substrate in the synthesis of ABO blood group antigens. H antigen is essential for maturation of the glomerular layer of the main olfactory bulb, in cell migration and early cell-cell contacts during tumor associated angiogenesis. Preferentially fucosylates soluble lactose and to a lesser extent fucosylates glycolipids gangliosides GA1 and GM1a. The chain is Galactoside alpha-(1,2)-fucosyltransferase 1 from Alouatta belzebul (Red-handed howler monkey).